Consider the following 292-residue polypeptide: NAD kinase (292 aa).

Residue Asp-73 is the Proton acceptor of the active site. NAD(+) is bound by residues Asp-73 to Gly-74, Asn-147 to Glu-148, His-158, Arg-175, Asp-177, Thr-188 to Ser-193, and Gln-247.

It belongs to the NAD kinase family. The cofactor is a divalent metal cation.

The protein localises to the cytoplasm. The catalysed reaction is NAD(+) + ATP = ADP + NADP(+) + H(+). Involved in the regulation of the intracellular balance of NAD and NADP, and is a key enzyme in the biosynthesis of NADP. Catalyzes specifically the phosphorylation on 2'-hydroxyl of the adenosine moiety of NAD to yield NADP. The sequence is that of NAD kinase from Shigella boydii serotype 4 (strain Sb227).